Consider the following 190-residue polypeptide: Transcription factor E (190 aa).

One can recognise an HTH TFE/IIEalpha-type domain in the interval 4–87; it reads KNKALLEIAK…YWHLETKRLP (84 aa). Positions 170–190 are disordered; the sequence is PSPKKEKKKTRAKAKRKTRKK. Basic residues predominate over residues 174 to 190; the sequence is KEKKKTRAKAKRKTRKK.

Belongs to the TFE family. In terms of assembly, monomer. Interaction with RNA polymerase subunits RpoF and RpoE is necessary for Tfe stimulatory transcription activity. Able to interact with Tbp and RNA polymerase in the absence of DNA promoter. Interacts both with the preinitiation and elongation complexes.

In terms of biological role, transcription factor that plays a role in the activation of archaeal genes transcribed by RNA polymerase. Facilitates transcription initiation by enhancing TATA-box recognition by TATA-box-binding protein (Tbp), and transcription factor B (Tfb) and RNA polymerase recruitment. Not absolutely required for transcription in vitro, but particularly important in cases where Tbp or Tfb function is not optimal. It dynamically alters the nucleic acid-binding properties of RNA polymerases by stabilizing the initiation complex and destabilizing elongation complexes. Seems to translocate with the RNA polymerase following initiation and acts by binding to the non template strand of the transcription bubble in elongation complexes. In Pyrococcus abyssi (strain GE5 / Orsay), this protein is Transcription factor E.